A 342-amino-acid chain; its full sequence is Dihydroorotate dehydrogenase (quinone) (342 aa).

FMN-binding positions include 61–65 and Thr85; that span reads AGLDK. Residue Lys65 coordinates substrate. 110 to 114 is a binding site for substrate; it reads NRMGF. Asn138 and Asn171 together coordinate FMN. Asn171 is a substrate binding site. Ser174 acts as the Nucleophile in catalysis. Asn176 is a binding site for substrate. FMN contacts are provided by Lys216 and Thr244. 245-246 serves as a coordination point for substrate; that stretch reads NT. FMN contacts are provided by residues Gly267, Gly296, and 317–318; that span reads YS.

It belongs to the dihydroorotate dehydrogenase family. Type 2 subfamily. As to quaternary structure, monomer. The cofactor is FMN.

The protein resides in the cell membrane. It catalyses the reaction (S)-dihydroorotate + a quinone = orotate + a quinol. The protein operates within pyrimidine metabolism; UMP biosynthesis via de novo pathway; orotate from (S)-dihydroorotate (quinone route): step 1/1. Its function is as follows. Catalyzes the conversion of dihydroorotate to orotate with quinone as electron acceptor. In Pseudomonas paraeruginosa (strain DSM 24068 / PA7) (Pseudomonas aeruginosa (strain PA7)), this protein is Dihydroorotate dehydrogenase (quinone).